We begin with the raw amino-acid sequence, 209 residues long: Uracil phosphoribosyltransferase (209 aa).

5-phospho-alpha-D-ribose 1-diphosphate is bound by residues arginine 79, arginine 104, and 131–139; that span reads DPMLATGGS. Uracil contacts are provided by residues isoleucine 194 and 199-201; that span reads GDA. Aspartate 200 contacts 5-phospho-alpha-D-ribose 1-diphosphate.

Belongs to the UPRTase family. Mg(2+) serves as cofactor.

The catalysed reaction is UMP + diphosphate = 5-phospho-alpha-D-ribose 1-diphosphate + uracil. It functions in the pathway pyrimidine metabolism; UMP biosynthesis via salvage pathway; UMP from uracil: step 1/1. Its activity is regulated as follows. Allosterically activated by GTP. In terms of biological role, catalyzes the conversion of uracil and 5-phospho-alpha-D-ribose 1-diphosphate (PRPP) to UMP and diphosphate. The polypeptide is Uracil phosphoribosyltransferase (Geobacter sulfurreducens (strain ATCC 51573 / DSM 12127 / PCA)).